The sequence spans 96 residues: Large ribosomal subunit protein bL27 (96 aa).

The segment at 13–33 (KGGGSTANGRNSAGRRLGAKA) is disordered.

Belongs to the bacterial ribosomal protein bL27 family.

The polypeptide is Large ribosomal subunit protein bL27 (Lactobacillus acidophilus (strain ATCC 700396 / NCK56 / N2 / NCFM)).